The primary structure comprises 333 residues: 4-hydroxythreonine-4-phosphate dehydrogenase (333 aa).

Residues His-136 and Thr-137 each contribute to the substrate site. A divalent metal cation contacts are provided by His-166, His-211, and His-266. Lys-274, Asn-283, and Arg-292 together coordinate substrate.

This sequence belongs to the PdxA family. In terms of assembly, homodimer. Zn(2+) serves as cofactor. It depends on Mg(2+) as a cofactor. The cofactor is Co(2+).

It is found in the cytoplasm. The enzyme catalyses 4-(phosphooxy)-L-threonine + NAD(+) = 3-amino-2-oxopropyl phosphate + CO2 + NADH. It functions in the pathway cofactor biosynthesis; pyridoxine 5'-phosphate biosynthesis; pyridoxine 5'-phosphate from D-erythrose 4-phosphate: step 4/5. In terms of biological role, catalyzes the NAD(P)-dependent oxidation of 4-(phosphooxy)-L-threonine (HTP) into 2-amino-3-oxo-4-(phosphooxy)butyric acid which spontaneously decarboxylates to form 3-amino-2-oxopropyl phosphate (AHAP). This Acidithiobacillus ferrooxidans (strain ATCC 23270 / DSM 14882 / CIP 104768 / NCIMB 8455) (Ferrobacillus ferrooxidans (strain ATCC 23270)) protein is 4-hydroxythreonine-4-phosphate dehydrogenase.